The following is a 154-amino-acid chain: 3-hydroxyacyl-[acyl-carrier-protein] dehydratase FabZ (154 aa).

His55 is a catalytic residue.

The protein belongs to the thioester dehydratase family. FabZ subfamily.

Its subcellular location is the cytoplasm. The enzyme catalyses a (3R)-hydroxyacyl-[ACP] = a (2E)-enoyl-[ACP] + H2O. In terms of biological role, involved in unsaturated fatty acids biosynthesis. Catalyzes the dehydration of short chain beta-hydroxyacyl-ACPs and long chain saturated and unsaturated beta-hydroxyacyl-ACPs. The polypeptide is 3-hydroxyacyl-[acyl-carrier-protein] dehydratase FabZ (Nitratidesulfovibrio vulgaris (strain DSM 19637 / Miyazaki F) (Desulfovibrio vulgaris)).